A 300-amino-acid chain; its full sequence is uncharacterized protein (300 aa).

An N-terminal signal peptide occupies residues 1–22 (MKSFVWTLLGALSLGSLTTAYG).

It is found in the endoplasmic reticulum. This is an uncharacterized protein from Schizosaccharomyces pombe (strain 972 / ATCC 24843) (Fission yeast).